Consider the following 851-residue polypeptide: DNA mismatch repair protein MutS (851 aa).

Residue 614–621 (GPNMGGKS) coordinates ATP.

Belongs to the DNA mismatch repair MutS family.

Its function is as follows. This protein is involved in the repair of mismatches in DNA. It is possible that it carries out the mismatch recognition step. This protein has a weak ATPase activity. The protein is DNA mismatch repair protein MutS of Yersinia pestis.